A 347-amino-acid chain; its full sequence is Heme A synthase (347 aa).

The next 8 helical transmembrane spans lie at 14–34 (VKVW…VGGI), 95–115 (YFHR…FLYF), 125–145 (LIVN…MGWL), 166–186 (LLLA…AVIL), 198–218 (LIFY…SLVA), 260–280 (FIHE…LLIL), 289–309 (LLLV…IYNV), and 311–331 (IALA…NTYL). H262 is a binding site for heme. H317 provides a ligand contact to heme.

Belongs to the COX15/CtaA family. Type 2 subfamily. As to quaternary structure, interacts with CtaB. Requires heme b as cofactor.

It is found in the cell membrane. The catalysed reaction is Fe(II)-heme o + 2 A + H2O = Fe(II)-heme a + 2 AH2. It participates in porphyrin-containing compound metabolism; heme A biosynthesis; heme A from heme O: step 1/1. In terms of biological role, catalyzes the conversion of heme O to heme A by two successive hydroxylations of the methyl group at C8. The first hydroxylation forms heme I, the second hydroxylation results in an unstable dihydroxymethyl group, which spontaneously dehydrates, resulting in the formyl group of heme A. In Ehrlichia canis (strain Jake), this protein is Heme A synthase.